The sequence spans 157 residues: uncharacterized protein (157 aa).

The protein belongs to the mimivirus L242/L243 family.

This is an uncharacterized protein from Acanthamoeba polyphaga (Amoeba).